Here is a 311-residue protein sequence, read N- to C-terminus: MPRPNFMAVTEFTFEGFSIFEWHHRLILFVIFLVLYVLTLASNAIILIVIRLNHQLHTPMYFFLSVLSISETYYTVAINPQMLSGLLSPQQTISIPGCAAQLFFYLTFGVNKCFLLTAMGYDHYVAICNPLQYSVIMGKKACIQLVSGSWNIGLSTAIIQVSSVFSLPFCDANLISHFFCDIRPIMKLACADTTIKEFITLLISLCVLVLPMVLIFISYVLIVTTILKIASAEGRRKAFATCASHLTVVIVHYGRTSFIYLKPKSQNSLQDRLISVTYTVITPLLNPVVYSLRNKEVKDALLRALGRKPLS.

The Extracellular segment spans residues 1–29; the sequence is MPRPNFMAVTEFTFEGFSIFEWHHRLILF. Residues 30-50 form a helical membrane-spanning segment; it reads VIFLVLYVLTLASNAIILIVI. The Cytoplasmic portion of the chain corresponds to 51–57; that stretch reads RLNHQLH. Residues 58–78 traverse the membrane as a helical segment; it reads TPMYFFLSVLSISETYYTVAI. The Extracellular segment spans residues 79–98; it reads NPQMLSGLLSPQQTISIPGC. Cys-98 and Cys-180 are oxidised to a cystine. The chain crosses the membrane as a helical span at residues 99–119; sequence AAQLFFYLTFGVNKCFLLTAM. Over 120-149 the chain is Cytoplasmic; that stretch reads GYDHYVAICNPLQYSVIMGKKACIQLVSGS. A helical membrane pass occupies residues 150–170; that stretch reads WNIGLSTAIIQVSSVFSLPFC. Residues 171–202 are Extracellular-facing; that stretch reads DANLISHFFCDIRPIMKLACADTTIKEFITLL. A helical transmembrane segment spans residues 203-223; that stretch reads ISLCVLVLPMVLIFISYVLIV. Residues 224–237 lie on the Cytoplasmic side of the membrane; sequence TTILKIASAEGRRK. A helical transmembrane segment spans residues 238–254; sequence AFATCASHLTVVIVHYG. At 255–272 the chain is on the extracellular side; the sequence is RTSFIYLKPKSQNSLQDR. Residues 273-292 traverse the membrane as a helical segment; the sequence is LISVTYTVITPLLNPVVYSL. Topologically, residues 293 to 311 are cytoplasmic; it reads RNKEVKDALLRALGRKPLS.

Belongs to the G-protein coupled receptor 1 family.

The protein resides in the cell membrane. In terms of biological role, odorant receptor. This Homo sapiens (Human) protein is Olfactory receptor 10J4 (OR10J4).